The primary structure comprises 515 residues: MECDLMETDILESLEDLGYKGPLLDDGALLQAVSAGAASPEFTKLCAWLVSELRVLCKLEENVQATNSPSEAEEFQLEVSGLLGEMNCPYPSLTSGDVTKRLLVEKNCLLLLTYLISELEAARMLCVNAPPKKAQEGGGSEVFQELKGICIALGMSKPPANITMFQFFSGIEKKLKETLAKVPPNHVGKPLLKKPMGPAHWEKIEAINQAIANEYEVRRKLLIKRLDVTVQSFGWSDRAKSQTDKLAKVYQPKRSLLSPKGKVSVAHLLAARQDLSKILRTSSGSIREKTACAINKVLMGRVPDRGGRPNEIEPPPPEMPPWQKRQDGPQQQAGGRGGGRGGYEHSSYGGRGGHEQGGRGGRGSYDHGGRGGGRGNKHQGGWTDGGSGSGGGYQDGAYRDSGFQPGGYHGGHSGGYQAGGYGGFQTSSYTGSGYQGGGYQQDNRYQDGGHHGERGSGRGGRGGRGGRGGRGSQGGGWGGRGSQTYHQGGQFEQHFQHGGYQYSHSGFGQGRHYTS.

2 disordered regions span residues 297–410 (VLMG…GYHG) and 432–515 (SGYQ…HYTS). The span at 302–311 (VPDRGGRPNE) shows a compositional bias: basic and acidic residues. Residues 382–394 (WTDGGSGSGGGYQ) show a composition bias toward gly residues. Residues 444–456 (RYQDGGHHGERGS) show a composition bias toward basic and acidic residues. Positions 457–481 (GRGGRGGRGGRGGRGSQGGGWGGRG) are enriched in gly residues. Positions 485 to 501 (YHQGGQFEQHFQHGGYQ) are enriched in low complexity. Over residues 502–515 (YSHSGFGQGRHYTS) the composition is skewed to polar residues.

Belongs to the FAM98 family. In terms of assembly, interacts (via N- and C-terminus) with DDX1. Interacts (via N- and C-terminus) with C14orf166. Interacts with FAM98B. Interacts with PLEKHM1 (via N- and C-terminus).

In terms of biological role, positively stimulates PRMT1-induced protein arginine methylation. Involved in skeletal homeostasis. Positively regulates lysosome peripheral distribution and ruffled border formation in osteoclasts. This is Protein FAM98A from Mus musculus (Mouse).